Here is a 417-residue protein sequence, read N- to C-terminus: Tyrosine--tRNA ligase (417 aa).

Y39 provides a ligand contact to L-tyrosine. The short motif at 44 to 53 is the 'HIGH' region element; it reads CTARSLHIGN. L-tyrosine is bound by residues Y176 and Q180. Positions 236–240 match the 'KMSKS' region motif; the sequence is KMGKT. K239 lines the ATP pocket. The 68-residue stretch at 350 to 417 folds into the S4 RNA-binding domain; sequence FGVLNAFVKA…KKKHILIKPA (68 aa).

It belongs to the class-I aminoacyl-tRNA synthetase family. TyrS type 1 subfamily. As to quaternary structure, homodimer.

The protein resides in the cytoplasm. The enzyme catalyses tRNA(Tyr) + L-tyrosine + ATP = L-tyrosyl-tRNA(Tyr) + AMP + diphosphate + H(+). In terms of biological role, catalyzes the attachment of tyrosine to tRNA(Tyr) in a two-step reaction: tyrosine is first activated by ATP to form Tyr-AMP and then transferred to the acceptor end of tRNA(Tyr). This chain is Tyrosine--tRNA ligase, found in Bradyrhizobium diazoefficiens (strain JCM 10833 / BCRC 13528 / IAM 13628 / NBRC 14792 / USDA 110).